Consider the following 243-residue polypeptide: MEDKPMTLFEHLEALRKVIIISVIAIVIGSIIAYNYVDYFLNILLQPVTALKMKLVFINVTEAFMTKLKIAIILGIILASPIILWQIWSFVAPGLKPAERKFILRMIPVIIILFVAGIVFAFFTVFQIATRFLLQFGGDIMSPMITIGKYISFALNFLIPFGLVFELPVVVYILAKLNIISHEFLVKNRKYALLVVFILAAALTPGPDVISQLLMAAPLLILYEVSIFIAKFIKPKEFSGERK.

Helical transmembrane passes span Val-18–Asp-38, Ile-70–Phe-90, Met-106–Phe-126, Phe-132–Ser-152, Phe-153–Ile-173, Tyr-191–Ser-211, and Leu-213–Ile-233.

Belongs to the TatC family. As to quaternary structure, forms a complex with TatA.

It is found in the cell membrane. In terms of biological role, part of the twin-arginine translocation (Tat) system that transports large folded proteins containing a characteristic twin-arginine motif in their signal peptide across membranes. The polypeptide is Sec-independent protein translocase protein TatC (Carboxydothermus hydrogenoformans (strain ATCC BAA-161 / DSM 6008 / Z-2901)).